The following is a 345-amino-acid chain: Small ribosomal subunit protein mS45 (345 aa).

A mitochondrion-targeting transit peptide spans 1-27; that stretch reads MSYGLTGTSSKLRGTSSIFSWTQVRHF.

This sequence belongs to the mitochondrion-specific ribosomal protein mS45 family. As to quaternary structure, component of the mitochondrial small ribosomal subunit (mt-SSU). Mature yeast 74S mitochondrial ribosomes consist of a small (37S) and a large (54S) subunit. The 37S small subunit contains a 15S ribosomal RNA (15S mt-rRNA) and 34 different proteins. The 54S large subunit contains a 21S rRNA (21S mt-rRNA) and 46 different proteins.

It is found in the mitochondrion. Functionally, component of the mitochondrial ribosome (mitoribosome), a dedicated translation machinery responsible for the synthesis of mitochondrial genome-encoded proteins, including at least some of the essential transmembrane subunits of the mitochondrial respiratory chain. The mitoribosomes are attached to the mitochondrial inner membrane and translation products are cotranslationally integrated into the membrane. The sequence is that of Small ribosomal subunit protein mS45 (MRPS35) from Saccharomyces cerevisiae (strain ATCC 204508 / S288c) (Baker's yeast).